The chain runs to 253 residues: Electron transfer flavoprotein subunit beta, mitochondrial (253 aa).

Belongs to the ETF beta-subunit/FixA family. As to quaternary structure, heterodimer of an alpha and a beta subunit. FAD is required as a cofactor. The cofactor is AMP.

Its subcellular location is the mitochondrion matrix. The electron transfer flavoprotein serves as a specific electron acceptor for several dehydrogenases, including five acyl-CoA dehydrogenases, glutaryl-CoA and sarcosine dehydrogenase. It transfers the electrons to the main mitochondrial respiratory chain via ETF-ubiquinone oxidoreductase (ETF dehydrogenase). This is Electron transfer flavoprotein subunit beta, mitochondrial (ETFB) from Oryza sativa subsp. japonica (Rice).